Here is a 473-residue protein sequence, read N- to C-terminus: MKTLYSLRRFYHVETLFNGTLALAGRDQETTGFAWWAGNARLINLSGKLLGAHVAHAGLIVFWAGAMNLFEVAHFVPEKPMYEQGLILLPHLATLGWGVGPGGEVIDTFPYFVSGVLHVISSAVLGFGGIYHALLGPETLEESFPFFGYVWKDRNKMTTILGIHLILLGVGAFLLVFKALYFGGVYDTWAPGGGDVRKITNLTLSPSVIFGYLLKSPFGGEGWIVSVDDLEDIIGGHVWLGSICIFGGIWHILTKPFAWARRALVWSGEAYLSYSLAALSVCGFIACCFVWFNNTAYPSEFYGPTGPEASQAQAFTFLVRDQRLGANVGSAQGPTGLGKYLMRSPTGEVIFGGETMRFWDLRAPWLEPLRGPNGLDLSRLKKDIQPWQERRSAEYMTHAPLGSLNSVGGVATEINAVNYVSPRSWLSTSHFVLGFFLFVGHLWHAGRARAAAAGFEKGIDRDFEPVLSMTPLN.

Positions 1 to 14 are excised as a propeptide; it reads MKTLYSLRRFYHVE. At T15 the chain carries N-acetylthreonine. The residue at position 15 (T15) is a Phosphothreonine. The next 5 membrane-spanning stretches (helical) occupy residues 69–93, 134–155, 178–200, 255–275, and 291–312; these read LFEV…PHLA, LLGP…KDRN, KALY…RKIT, KPFA…LSYS, and WFNN…ASQA. Position 367 (E367) interacts with [CaMn4O5] cluster. Residues 447-471 form a helical membrane-spanning segment; the sequence is RARAAAAGFEKGIDRDFEPVLSMTP.

Belongs to the PsbB/PsbC family. PsbC subfamily. PSII is composed of 1 copy each of membrane proteins PsbA, PsbB, PsbC, PsbD, PsbE, PsbF, PsbH, PsbI, PsbJ, PsbK, PsbL, PsbM, PsbT, PsbX, PsbY, PsbZ, Psb30/Ycf12, at least 3 peripheral proteins of the oxygen-evolving complex and a large number of cofactors. It forms dimeric complexes. Binds multiple chlorophylls and provides some of the ligands for the Ca-4Mn-5O cluster of the oxygen-evolving complex. It may also provide a ligand for a Cl- that is required for oxygen evolution. PSII binds additional chlorophylls, carotenoids and specific lipids. is required as a cofactor.

The protein localises to the plastid. Its subcellular location is the chloroplast thylakoid membrane. In terms of biological role, one of the components of the core complex of photosystem II (PSII). It binds chlorophyll and helps catalyze the primary light-induced photochemical processes of PSII. PSII is a light-driven water:plastoquinone oxidoreductase, using light energy to abstract electrons from H(2)O, generating O(2) and a proton gradient subsequently used for ATP formation. In Capsella bursa-pastoris (Shepherd's purse), this protein is Photosystem II CP43 reaction center protein.